We begin with the raw amino-acid sequence, 241 residues long: Small ribosomal subunit protein uS3 (241 aa).

Positions 22–91 constitute a KH type-2 domain; the sequence is VDEYLAYKFH…NPQVTVVKVE (70 aa). The disordered stretch occupies residues 218 to 241; the sequence is EMQQTQPEAPTLEETVEQSGGETQ.

This sequence belongs to the universal ribosomal protein uS3 family. As to quaternary structure, part of the 30S ribosomal subunit.

Binds the lower part of the 30S subunit head. The protein is Small ribosomal subunit protein uS3 of Ignicoccus hospitalis (strain KIN4/I / DSM 18386 / JCM 14125).